Here is a 331-residue protein sequence, read N- to C-terminus: tRNA-cytidine(32) 2-sulfurtransferase (331 aa).

The PP-loop motif motif lies at 71 to 76 (SGGKDS). Residues C146, C149, and C237 each contribute to the [4Fe-4S] cluster site.

The protein belongs to the TtcA family. As to quaternary structure, homodimer. Mg(2+) is required as a cofactor. Requires [4Fe-4S] cluster as cofactor.

The protein resides in the cytoplasm. It carries out the reaction cytidine(32) in tRNA + S-sulfanyl-L-cysteinyl-[cysteine desulfurase] + AH2 + ATP = 2-thiocytidine(32) in tRNA + L-cysteinyl-[cysteine desulfurase] + A + AMP + diphosphate + H(+). It participates in tRNA modification. Catalyzes the ATP-dependent 2-thiolation of cytidine in position 32 of tRNA, to form 2-thiocytidine (s(2)C32). The sulfur atoms are provided by the cysteine/cysteine desulfurase (IscS) system. The protein is tRNA-cytidine(32) 2-sulfurtransferase of Burkholderia multivorans (strain ATCC 17616 / 249).